Here is a 164-residue protein sequence, read N- to C-terminus: Phosphopantetheine adenylyltransferase (164 aa).

Serine 9 provides a ligand contact to substrate. ATP-binding positions include 9 to 10 (SF) and histidine 17. The substrate site is built by lysine 41, alanine 78, and arginine 92. ATP contacts are provided by residues 93-95 (GLR), glutamate 103, and 128-134 (SRPITAT).

The protein belongs to the bacterial CoaD family. Homohexamer. Mg(2+) serves as cofactor.

Its subcellular location is the cytoplasm. It catalyses the reaction (R)-4'-phosphopantetheine + ATP + H(+) = 3'-dephospho-CoA + diphosphate. It participates in cofactor biosynthesis; coenzyme A biosynthesis; CoA from (R)-pantothenate: step 4/5. Reversibly transfers an adenylyl group from ATP to 4'-phosphopantetheine, yielding dephospho-CoA (dPCoA) and pyrophosphate. The protein is Phosphopantetheine adenylyltransferase of Allorhizobium ampelinum (strain ATCC BAA-846 / DSM 112012 / S4) (Agrobacterium vitis (strain S4)).